Reading from the N-terminus, the 169-residue chain is Cell division inhibitor SulA (169 aa).

Positions 106–112 are ftsZ binding; sequence ALRTGNY. The tract at residues 162 to 169 is lon protease binding; sequence KIHSNLYH.

It belongs to the SulA family. In terms of assembly, interacts with FtsZ. In terms of processing, is rapidly cleaved and degraded by the Lon protease once DNA damage is repaired.

Its function is as follows. Component of the SOS system and an inhibitor of cell division. Accumulation of SulA causes rapid cessation of cell division and the appearance of long, non-septate filaments. In the presence of GTP, binds a polymerization-competent form of FtsZ in a 1:1 ratio, thus inhibiting FtsZ polymerization and therefore preventing it from participating in the assembly of the Z ring. This mechanism prevents the premature segregation of damaged DNA to daughter cells during cell division. The chain is Cell division inhibitor SulA from Citrobacter koseri (strain ATCC BAA-895 / CDC 4225-83 / SGSC4696).